The chain runs to 921 residues: Dual serine/threonine and tyrosine protein kinase (921 aa).

A Protein kinase domain is found at 645–899 (PKLGRELGRG…PLLGIVEPSL (255 aa)). ATP contacts are provided by residues 651 to 659 (LGRGQYGVV) and Lys674. Asp770 (proton acceptor) is an active-site residue.

It belongs to the protein kinase superfamily. Ser/Thr protein kinase family.

It is found in the cytoplasm. The protein resides in the cell membrane. It localises to the apical cell membrane. Its subcellular location is the basolateral cell membrane. The protein localises to the cell junction. It catalyses the reaction L-seryl-[protein] + ATP = O-phospho-L-seryl-[protein] + ADP + H(+). The catalysed reaction is L-threonyl-[protein] + ATP = O-phospho-L-threonyl-[protein] + ADP + H(+). It carries out the reaction L-tyrosyl-[protein] + ATP = O-phospho-L-tyrosyl-[protein] + ADP + H(+). Its function is as follows. May act as a positive regulator of ERK phosphorylation downstream of fibroblast growth factor-receptor activation. May induce both caspase-dependent apoptosis and caspase-independent cell death. May play a role in the embryonic development. This chain is Dual serine/threonine and tyrosine protein kinase (dstyk), found in Takifugu rubripes (Japanese pufferfish).